An 815-amino-acid polypeptide reads, in one-letter code: Calpain-3 (815 aa).

The interval 7-36 is disordered; the sequence is ASVAPRTAAEPRSPGPVPHPAQSKATEAGG. The Calpain catalytic domain occupies 74-417; that stretch reads LYVDPEFPPD…FTKLEICNLT (344 aa). Active-site residues include C129, H334, and N358. The domain III stretch occupies residues 418 to 586; the sequence is ADALQSDKLQ…KRNLSEEVEN (169 aa). A linker region spans residues 587 to 649; it reads TISVDRPVPI…QESEEQQQFR (63 aa). A disordered region spans residues 605-646; it reads SNKELGVDQESEEGKGKTSPDKQEQSPQPQPGSSDQESEEQQ. Residues 616–628 show a composition bias toward basic and acidic residues; sequence EEGKGKTSPDKQE. Low complexity predominate over residues 629–639; the sequence is QSPQPQPGSSD. EF-hand domains lie at 643-677, 686-719, 716-751, and 781-815; these read EEQQ…VVNK, FTLE…NKIK, NKIK…AGFH, and VRLE…TMYA. Residues 650–815 form a domain IV region; sequence NIFKQIAGDD…LEWLQLTMYA (166 aa). A656, D659, E661, E666, D699, D701, S703, K705, E710, D729, D731, S733, T735, E740, D794, D796, D798, and I800 together coordinate Ca(2+).

This sequence belongs to the peptidase C2 family. As to quaternary structure, homodimer; via EF-hand domain 4. Interacts with TTN/titin. Interacts with CMYA5; this interaction, which results in CMYA5 proteolysis, may protect CAPN3 from autolysis. Interacts with SIMC1. Interacts with UTP25; the interaction is required for CAPN3 translocation to the nucleolus.

It is found in the cytoplasm. Its subcellular location is the nucleus. It localises to the nucleolus. It carries out the reaction Broad endopeptidase activity.. Activated by micromolar concentrations of calcium and inhibited by calpastatin. Calcium-regulated non-lysosomal thiol-protease. Proteolytically cleaves CTBP1. Mediates, with UTP25, the proteasome-independent degradation of p53/TP53. The sequence is that of Calpain-3 (CAPN3) from Macaca fascicularis (Crab-eating macaque).